Here is a 421-residue protein sequence, read N- to C-terminus: Nuclear envelope integral membrane protein 2 (421 aa).

The N-terminal stretch at 1–22 (MPPGSWWLVLWLPPLATLPAGA) is a signal peptide. The next 5 helical transmembrane spans lie at 147–167 (NVVD…FFYA), 175–195 (VFYY…FVLL), 206–226 (TFGA…CQLM), 232–252 (LWCG…LCSF), and 279–299 (LVLV…MILL).

This sequence belongs to the NEMP family.

The protein localises to the nucleus inner membrane. This chain is Nuclear envelope integral membrane protein 2 (Nemp2), found in Rattus norvegicus (Rat).